Reading from the N-terminus, the 191-residue chain is Probable GTP-binding protein EngB (191 aa).

The 170-residue stretch at 22–191 folds into the EngB-type G domain; sequence DFDHFLILGR…KLINEEFSNE (170 aa). Residues 30 to 37, 57 to 61, 75 to 78, 142 to 145, and 172 to 174 contribute to the GTP site; these read GRSNVGKS, GKTIT, DAPG, TKYD, and TSS. The Mg(2+) site is built by Ser37 and Thr59.

This sequence belongs to the TRAFAC class TrmE-Era-EngA-EngB-Septin-like GTPase superfamily. EngB GTPase family. The cofactor is Mg(2+).

Necessary for normal cell division and for the maintenance of normal septation. This is Probable GTP-binding protein EngB from Acholeplasma laidlawii (strain PG-8A).